Consider the following 83-residue polypeptide: Small integral membrane protein 22 (83 aa).

Residues 32-52 (VAFIVFLTFMGTVLLLLLLVV) form a helical membrane-spanning segment. Residues 60–83 (SPGPRRESPRKERPKGVDNLALEP) form a disordered region. Residues 63-75 (PRRESPRKERPKG) show a composition bias toward basic and acidic residues.

In terms of assembly, interacts with CANX and DDOST. Interacts with SQLE; this interaction modulates lipid droplet formation.

The protein localises to the membrane. Its subcellular location is the late endosome. May modulate lipid droplet formation throught interaction with SQLE. This Homo sapiens (Human) protein is Small integral membrane protein 22.